Here is a 569-residue protein sequence, read N- to C-terminus: Proline--tRNA ligase (569 aa).

This sequence belongs to the class-II aminoacyl-tRNA synthetase family. ProS type 1 subfamily. Homodimer.

It localises to the cytoplasm. The enzyme catalyses tRNA(Pro) + L-proline + ATP = L-prolyl-tRNA(Pro) + AMP + diphosphate. Its function is as follows. Catalyzes the attachment of proline to tRNA(Pro) in a two-step reaction: proline is first activated by ATP to form Pro-AMP and then transferred to the acceptor end of tRNA(Pro). As ProRS can inadvertently accommodate and process non-cognate amino acids such as alanine and cysteine, to avoid such errors it has two additional distinct editing activities against alanine. One activity is designated as 'pretransfer' editing and involves the tRNA(Pro)-independent hydrolysis of activated Ala-AMP. The other activity is designated 'posttransfer' editing and involves deacylation of mischarged Ala-tRNA(Pro). The misacylated Cys-tRNA(Pro) is not edited by ProRS. The protein is Proline--tRNA ligase of Nitrosospira multiformis (strain ATCC 25196 / NCIMB 11849 / C 71).